Here is a 515-residue protein sequence, read N- to C-terminus: Maturase K (515 aa).

It belongs to the intron maturase 2 family. MatK subfamily.

The protein resides in the plastid. The protein localises to the chloroplast. In terms of biological role, usually encoded in the trnK tRNA gene intron. Probably assists in splicing its own and other chloroplast group II introns. The protein is Maturase K of Pinus roxburghii (Chir pine).